Consider the following 333-residue polypeptide: MSGDEMIFDPTMSKKKKKKKKPFMLDEEGDAQTEETQPLETKEVEPEPTEDKDVEADEEDSRKKDASDDLDDLNFFNQKKKKKKTKKIFDIDEAEEGVKDLKIENDVQEPAEPEDDLDIMLGNKKKKKKNVKFPDEDEILEKDEALEDEDSKKDDGISFSNQTGPAWAGSERDYTYEELLNRVFNIMREKNPDMVAGEKRKFVMKPPQVVRVGTKKTSFVNFTDICKLLHRQPKHLLAFLLAELGTSGSIDGNNQLVIKGRFQQKQIENVLRRYIKEYVTCHTCRSPDTILQKDTRLYFLQCETCHSRCSVASIKTGFQAVTGKRAQLRAKAN.

2 disordered regions span residues 1-120 (MSGD…LDIM) and 139-165 (ILEK…QTGP). An N-acetylserine modification is found at Ser2. Residue Ser2 is modified to Phosphoserine. A Phosphoserine; by PKC; in vitro modification is found at Ser13. Positions 13 to 22 (SKKKKKKKKP) are enriched in basic residues. Phosphothreonine is present on Thr36. Residues 40–51 (ETKEVEPEPTED) are compositionally biased toward basic and acidic residues. The residue at position 67 (Ser67) is a Phosphoserine; by CK2. The span at 96-105 (EGVKDLKIEN) shows a compositional bias: basic and acidic residues. Residue Lys102 forms a Glycyl lysine isopeptide (Lys-Gly) (interchain with G-Cter in SUMO2) linkage. Composition is skewed to acidic residues over residues 106–118 (DVQE…DDLD) and 139–149 (ILEKDEALEDE). The residue at position 158 (Ser158) is a Phosphoserine. Position 218 is a phosphoserine; by PKA; in vitro (Ser218). An N6-acetyllysine mark is found at Lys265 and Lys293. Residues 281 to 305 (CHTCRSPDTILQKDTRLYFLQCETC) form a C4-type zinc finger.

It belongs to the eIF-2-beta/eIF-5 family. In terms of assembly, eukaryotic translation initiation factor 2 eIF2 is a heterotrimeric complex composed of an alpha (EIF2S1), a beta (EIF2S2) and a gamma (EIF2S3) chain. eIF2 is member of the 43S pre-initiation complex (43S PIC). eIF2 forms a complex with at least CELF1/CUGBP1, CALR, CALR3, EIF2S1, EIF2S2, HSP90B1 and HSPA5. Interacts with BZW2/5MP1. Interacts with EIF5. Post-translationally, the N-terminus is blocked.

The protein resides in the cytoplasm. It localises to the cytosol. Functionally, component of the eIF2 complex that functions in the early steps of protein synthesis by forming a ternary complex with GTP and initiator tRNA. This complex binds to a 40S ribosomal subunit, followed by mRNA binding to form the 43S pre-initiation complex (43S PIC). Junction of the 60S ribosomal subunit to form the 80S initiation complex is preceded by hydrolysis of the GTP bound to eIF2 and release of an eIF2-GDP binary complex. In order for eIF2 to recycle and catalyze another round of initiation, the GDP bound to eIF2 must exchange with GTP by way of a reaction catalyzed by eIF2B. In Oryctolagus cuniculus (Rabbit), this protein is Eukaryotic translation initiation factor 2 subunit 2 (EIF2S2).